Consider the following 335-residue polypeptide: Putative D-threonate 4-phosphate dehydrogenase (335 aa).

Residues His140 and Thr141 each contribute to the substrate site. A divalent metal cation contacts are provided by His170, His214, and His269. Residues Lys277 and Arg295 each coordinate substrate.

The protein belongs to the PdxA family. PdxA2 subfamily. In terms of assembly, homodimer. Requires a divalent metal cation as cofactor.

It catalyses the reaction 4-O-phospho-D-threonate + NAD(+) = dihydroxyacetone phosphate + CO2 + NADH. Functionally, catalyzes the NAD-dependent oxidation and subsequent decarboxylation of D-threonate 4-phosphate to produce dihydroxyacetone phosphate (DHAP). In Symbiobacterium thermophilum (strain DSM 24528 / JCM 14929 / IAM 14863 / T), this protein is Putative D-threonate 4-phosphate dehydrogenase.